The chain runs to 92 residues: Small ribosomal subunit protein uS19 (92 aa).

This sequence belongs to the universal ribosomal protein uS19 family.

Protein S19 forms a complex with S13 that binds strongly to the 16S ribosomal RNA. The sequence is that of Small ribosomal subunit protein uS19 from Nostoc punctiforme (strain ATCC 29133 / PCC 73102).